A 342-amino-acid chain; its full sequence is Palmitoyltransferase PFA4 (342 aa).

Over 1-8 (MITFSNPW) the chain is Cytoplasmic. Residues 9-29 (IGVIIPCIIIFTLSTFSAIYI) form a helical membrane-spanning segment. Residues 30-38 (LPHHVSNNE) are Lumenal-facing. Residues 39–59 (LTLFICASAMVWISYIIAIIV) traverse the membrane as a helical segment. At 60–124 (PPGSPPKNYT…GHRNMPHFMR (65 aa)) the chain is on the cytoplasmic side. Residues 77-127 (MYCLKCKAYKPERTHHSKALGVCVLKMDHHCPWTNNTVGHRNMPHFMRFLV) enclose the DHHC domain. The S-palmitoyl cysteine intermediate role is filled by Cys-107. The chain crosses the membrane as a helical span at residues 125 to 145 (FLVWVDMTVGYLFIRLCIRIM). The Lumenal segment spans residues 146–162 (KLWRDKHLPSYLFDKTE). Residues 163 to 183 (VILSIVFLPASFFVLFTVGIL) form a helical membrane-spanning segment. Topologically, residues 184 to 342 (TIRVFVNMCN…ADFGVEHTDI (159 aa)) are cytoplasmic.

Belongs to the DHHC palmitoyltransferase family. PFA4 subfamily.

It localises to the endoplasmic reticulum membrane. It catalyses the reaction L-cysteinyl-[protein] + hexadecanoyl-CoA = S-hexadecanoyl-L-cysteinyl-[protein] + CoA. In terms of biological role, mediates the reversible addition of palmitate to target proteins, thereby regulating their membrane association and biological function. This Yarrowia lipolytica (strain CLIB 122 / E 150) (Yeast) protein is Palmitoyltransferase PFA4.